Reading from the N-terminus, the 254-residue chain is Ciliary microtubule associated protein 1A (254 aa).

STPGR repeat units lie at residues 180-205 and 216-241; these read PGPAAYRQTDVQVTKFKAPQYTMAAR and PGPGAHSPEKVTMTRPCAPVVSFGIK. The tract at residues 207 to 226 is disordered; that stretch reads EPPGDKTLKPGPGAHSPEKV.

This sequence belongs to the CIMAP family. Microtubule inner protein component of sperm flagellar doublet microtubules.

The protein resides in the cytoplasm. It localises to the cytoskeleton. The protein localises to the flagellum axoneme. In terms of biological role, outer dense fibers are filamentous structures located on the outside of the axoneme in the midpiece and principal piece of the mammalian sperm tail. May help to maintain the passive elastic structures and elastic recoil of the sperm tail. The sequence is that of Ciliary microtubule associated protein 1A (CIMAP1A) from Bos taurus (Bovine).